Reading from the N-terminus, the 284-residue chain is Protoheme IX farnesyltransferase (284 aa).

9 consecutive transmembrane segments (helical) span residues 13-33 (VTVLVLATVLPGMYLGTTGYP), 35-55 (LTVISITLFGTYLMSSASFIL), 84-104 (FALLLGIVVAIVSFGILTYFI), 106-126 (LLTAVCALAALLLYVFLYTIW), 134-154 (NIVIGGISGCIGPLIGYAAMA), 163-183 (VMFLMIFLWTPAHFWALAIFL), 205-225 (VNQIFLYAIAYSLSVIGFYFV), 229-249 (MGYLFLLSAIVLTVLILGFAY), and 264-284 (FFFSILHLFLVSIAIVIDSKI).

This sequence belongs to the UbiA prenyltransferase family. Protoheme IX farnesyltransferase subfamily.

The protein resides in the cell inner membrane. It catalyses the reaction heme b + (2E,6E)-farnesyl diphosphate + H2O = Fe(II)-heme o + diphosphate. It functions in the pathway porphyrin-containing compound metabolism; heme O biosynthesis; heme O from protoheme: step 1/1. Its function is as follows. Converts heme B (protoheme IX) to heme O by substitution of the vinyl group on carbon 2 of heme B porphyrin ring with a hydroxyethyl farnesyl side group. The sequence is that of Protoheme IX farnesyltransferase from Leptospira biflexa serovar Patoc (strain Patoc 1 / Ames).